Consider the following 392-residue polypeptide: ATP phosphoribosyltransferase regulatory subunit (392 aa).

It belongs to the class-II aminoacyl-tRNA synthetase family. HisZ subfamily. In terms of assembly, heteromultimer composed of HisG and HisZ subunits.

Its subcellular location is the cytoplasm. It functions in the pathway amino-acid biosynthesis; L-histidine biosynthesis; L-histidine from 5-phospho-alpha-D-ribose 1-diphosphate: step 1/9. Functionally, required for the first step of histidine biosynthesis. May allow the feedback regulation of ATP phosphoribosyltransferase activity by histidine. The sequence is that of ATP phosphoribosyltransferase regulatory subunit from Prochlorococcus marinus (strain MIT 9313).